A 303-amino-acid chain; its full sequence is ATP phosphoribosyltransferase (303 aa).

The protein belongs to the ATP phosphoribosyltransferase family. Long subfamily. Mg(2+) is required as a cofactor.

It localises to the cytoplasm. It carries out the reaction 1-(5-phospho-beta-D-ribosyl)-ATP + diphosphate = 5-phospho-alpha-D-ribose 1-diphosphate + ATP. It participates in amino-acid biosynthesis; L-histidine biosynthesis; L-histidine from 5-phospho-alpha-D-ribose 1-diphosphate: step 1/9. With respect to regulation, feedback inhibited by histidine. In terms of biological role, catalyzes the condensation of ATP and 5-phosphoribose 1-diphosphate to form N'-(5'-phosphoribosyl)-ATP (PR-ATP). Has a crucial role in the pathway because the rate of histidine biosynthesis seems to be controlled primarily by regulation of HisG enzymatic activity. In Haemophilus influenzae (strain PittGG), this protein is ATP phosphoribosyltransferase.